The sequence spans 387 residues: 1-deoxy-D-xylulose 5-phosphate reductoisomerase (387 aa).

Residues T11, G12, S13, I14, G37, R38, Q39, and N127 each contribute to the NADPH site. Residue K128 participates in 1-deoxy-D-xylulose 5-phosphate binding. An NADPH-binding site is contributed by E129. D153 contacts Mn(2+). Residues S154, E155, S179, and H200 each contribute to the 1-deoxy-D-xylulose 5-phosphate site. E155 contributes to the Mn(2+) binding site. G206 lines the NADPH pocket. 1-deoxy-D-xylulose 5-phosphate contacts are provided by S213, N218, K219, and E222. Mn(2+) is bound at residue E222.

This sequence belongs to the DXR family. The cofactor is Mg(2+). Mn(2+) is required as a cofactor.

It carries out the reaction 2-C-methyl-D-erythritol 4-phosphate + NADP(+) = 1-deoxy-D-xylulose 5-phosphate + NADPH + H(+). It functions in the pathway isoprenoid biosynthesis; isopentenyl diphosphate biosynthesis via DXP pathway; isopentenyl diphosphate from 1-deoxy-D-xylulose 5-phosphate: step 1/6. In terms of biological role, catalyzes the NADPH-dependent rearrangement and reduction of 1-deoxy-D-xylulose-5-phosphate (DXP) to 2-C-methyl-D-erythritol 4-phosphate (MEP). The protein is 1-deoxy-D-xylulose 5-phosphate reductoisomerase of Symbiobacterium thermophilum (strain DSM 24528 / JCM 14929 / IAM 14863 / T).